We begin with the raw amino-acid sequence, 304 residues long: Probable solute-binding protein AdeT1 (304 aa).

The protein belongs to the bacterial solute-binding protein 7 family.

In terms of biological role, mediates antimicrobial resistance via active efflux. Contributes to resistance to antibiotics such as chloramphenicol, erythromycin and novobiocin. May be part of a tripartite ATP-independent periplasmic (TRAP) transport system. The protein is Probable solute-binding protein AdeT1 of Acinetobacter baumannii.